Reading from the N-terminus, the 102-residue chain is Small ribosomal subunit protein bS20 (102 aa).

It belongs to the bacterial ribosomal protein bS20 family.

Its function is as follows. Binds directly to 16S ribosomal RNA. In Gloeobacter violaceus (strain ATCC 29082 / PCC 7421), this protein is Small ribosomal subunit protein bS20.